The chain runs to 218 residues: Small ribosomal subunit protein uS3c (218 aa).

The region spanning 47 to 118 (VYKNIRNSSN…KLRMTLTEVT (72 aa)) is the KH type-2 domain.

This sequence belongs to the universal ribosomal protein uS3 family. Part of the 30S ribosomal subunit.

It localises to the plastid. Its subcellular location is the chloroplast. This is Small ribosomal subunit protein uS3c (rps3) from Physcomitrium patens (Spreading-leaved earth moss).